A 128-amino-acid polypeptide reads, in one-letter code: Glycine cleavage system H protein (128 aa).

In terms of domain architecture, Lipoyl-binding spans 24–106; sequence VYTVGITEHA…YAEGFLFQIK (83 aa). Lys-65 carries the N6-lipoyllysine modification.

The protein belongs to the GcvH family. The glycine cleavage system is composed of four proteins: P, T, L and H. It depends on (R)-lipoate as a cofactor.

In terms of biological role, the glycine cleavage system catalyzes the degradation of glycine. The H protein shuttles the methylamine group of glycine from the P protein to the T protein. The chain is Glycine cleavage system H protein from Serratia proteamaculans (strain 568).